We begin with the raw amino-acid sequence, 335 residues long: UPF0353 protein MAP_1207 (335 aa).

A run of 2 helical transmembrane segments spans residues 18–38 (WFFL…LMQL) and 67–87 (LPAI…AGPT). In terms of domain architecture, VWFA spans 98–294 (VVMLVIDVSQ…QELKSVYATL (197 aa)). The chain crosses the membrane as a helical span at residues 309-329 (VGWVRLGALVLALAALTALLI).

It belongs to the UPF0353 family.

The protein resides in the cell membrane. The sequence is that of UPF0353 protein MAP_1207 from Mycolicibacterium paratuberculosis (strain ATCC BAA-968 / K-10) (Mycobacterium paratuberculosis).